Consider the following 380-residue polypeptide: L-prolyl-[peptidyl-carrier protein] dehydrogenase (380 aa).

Residue Glu243 is the Proton acceptor of the active site. Residues Arg269 and Gln280 each contribute to the FAD site.

The protein belongs to the acyl-CoA dehydrogenase family. The cofactor is FAD.

It carries out the reaction L-prolyl-[peptidyl-carrier protein] + 2 oxidized [electron-transfer flavoprotein] + H(+) = (1H-pyrrole-2-carbonyl)-[peptidyl-carrier protein] + 2 reduced [electron-transfer flavoprotein]. Its function is as follows. Involved in the biosynthesis of pyoluteorin. Catalyzes the desaturation of the L-prolyl-[PltL] to yield 1H-pyrrole-2-carbonyl-[PltL]. The polypeptide is L-prolyl-[peptidyl-carrier protein] dehydrogenase (Pseudomonas fluorescens (strain ATCC BAA-477 / NRRL B-23932 / Pf-5)).